We begin with the raw amino-acid sequence, 1033 residues long: Isoleucine--tRNA ligase 2 (1033 aa).

The short motif at 47–57 (PTANGLPHVGH) is the 'HIGH' region element. Positions 590 to 594 (KMSKS) match the 'KMSKS' region motif. Residue Lys-593 coordinates ATP.

This sequence belongs to the class-I aminoacyl-tRNA synthetase family. IleS type 2 subfamily. Monomer. Requires Zn(2+) as cofactor.

It is found in the cytoplasm. It catalyses the reaction tRNA(Ile) + L-isoleucine + ATP = L-isoleucyl-tRNA(Ile) + AMP + diphosphate. Catalyzes the attachment of isoleucine to tRNA(Ile). As IleRS can inadvertently accommodate and process structurally similar amino acids such as valine, to avoid such errors it has two additional distinct tRNA(Ile)-dependent editing activities. One activity is designated as 'pretransfer' editing and involves the hydrolysis of activated Val-AMP. The other activity is designated 'posttransfer' editing and involves deacylation of mischarged Val-tRNA(Ile). The polypeptide is Isoleucine--tRNA ligase 2 (Bacillus anthracis).